The primary structure comprises 570 residues: MSEKHPGPLVVEGKLSDAERMKRESNFLRGTIAEDLNDGLTGGFHGDNFLLIRFHGMYQQDDRDIRAERAAQKLEPRHAMLLRCRLPGGVITTTQWKAIDKFAADNTIYGSIRLTNRQTFQFHGILKKNVKPVHQMLHSVGLDALATANDMNRNVLCTSNPYESQLHAEAYEWAKKISEHLLPRTRAYAEIWLDQEKVATTDEEPILGQTYLPRKFKTTVVIPPQNDIDLHANDMNLVAIAENGKLVGFNLLVGGGLSIEHGNKKTYARTASEFGYLPLEHTLAVAEAVVTTQRDWGNRTDRKNAKTKYTLERVGVDTFKEEVERRAGIKFEPIRPYEFTGRGDRIGWVKGIDNNWHLTLFIENGRILDYSGRPLKTGLLEIAKIHQGEFRITANQNLIIASVPESQKAKIETLARDHGLMNAVKPQRENSMACVSFPTCPLAMAEAERFLPSFTDKVEAILEKHGIPDEHIVMRVTGCPNGCGRAMLAEIGLVGKAPGRYNLHLGGNRIGTRIPRMYKENITEPDILASLGELIGRWAKEREAGEGFGDFTVRAGIIRPVLDPARDFWE.

The [4Fe-4S] cluster site is built by Cys434, Cys440, Cys479, and Cys483. Residue Cys483 coordinates siroheme.

It belongs to the nitrite and sulfite reductase 4Fe-4S domain family. In terms of assembly, alpha(8)-beta(8). The alpha component is a flavoprotein, the beta component is a hemoprotein. Siroheme serves as cofactor. It depends on [4Fe-4S] cluster as a cofactor.

The enzyme catalyses hydrogen sulfide + 3 NADP(+) + 3 H2O = sulfite + 3 NADPH + 4 H(+). It participates in sulfur metabolism; hydrogen sulfide biosynthesis; hydrogen sulfide from sulfite (NADPH route): step 1/1. In terms of biological role, component of the sulfite reductase complex that catalyzes the 6-electron reduction of sulfite to sulfide. This is one of several activities required for the biosynthesis of L-cysteine from sulfate. This chain is Sulfite reductase [NADPH] hemoprotein beta-component, found in Salmonella paratyphi A (strain ATCC 9150 / SARB42).